We begin with the raw amino-acid sequence, 254 residues long: Pyruvate dehydrogenase complex repressor (254 aa).

In terms of domain architecture, HTH gntR-type spans proline 9–serine 77. The segment at residues glutamate 37–glutamine 56 is a DNA-binding region (H-T-H motif).

Functionally, transcriptional repressor for the pyruvate dehydrogenase complex genes aceEF and lpd. This chain is Pyruvate dehydrogenase complex repressor (pdhR), found in Salmonella typhi.